Reading from the N-terminus, the 228-residue chain is Cytidylate kinase (228 aa).

Residue 11-19 (GPAGTGKSS) participates in ATP binding.

It belongs to the cytidylate kinase family. Type 1 subfamily.

Its subcellular location is the cytoplasm. It carries out the reaction CMP + ATP = CDP + ADP. It catalyses the reaction dCMP + ATP = dCDP + ADP. The sequence is that of Cytidylate kinase from Mycolicibacterium paratuberculosis (strain ATCC BAA-968 / K-10) (Mycobacterium paratuberculosis).